A 267-amino-acid polypeptide reads, in one-letter code: Cell division control protein 11 (267 aa).

The Septin-type G domain maps to 6 to 263 (QNRRFTIMAA…ENYRAAVLEG (258 aa)). A G1 motif region spans residues 16-23 (GPRGSGKS). Residues 16–23 (GPRGSGKS), Gly-66, 146–154 (KSDGLSITE), and Arg-212 each bind GTP. Residues 63–66 (DTPG) are G3 motif. The segment at 145 to 148 (SKSD) is G4 motif.

The protein belongs to the TRAFAC class TrmE-Era-EngA-EngB-Septin-like GTPase superfamily. Septin GTPase family. As to quaternary structure, component of the septin complex.

Its function is as follows. Septins are GTPases involved in cytokinesis. The septins localize to the site of cleavage and act as a structural scaffold that recruits different components involved in diverse processes at specific stages during the cell cycle. Septins are also involved in cell morphogenesis, chitin deposition, cell cycle regulation, cell compartmentalization and spore wall formation. The sequence is that of Cell division control protein 11 (CDC11) from Encephalitozoon cuniculi (strain GB-M1) (Microsporidian parasite).